The following is a 244-amino-acid chain: Probable fimbrial assembly protein FimC, serogroup H1 (244 aa).

The protein is Probable fimbrial assembly protein FimC, serogroup H1 (fimC) of Dichelobacter nodosus (Bacteroides nodosus).